A 673-amino-acid chain; its full sequence is NADH-quinone oxidoreductase chain 3 (673 aa).

In terms of domain architecture, 2Fe-2S ferredoxin-type spans 5 to 90 (RKIKIDDTII…PSEIRTNSPM (86 aa)). The [2Fe-2S] cluster site is built by Cys-37, Cys-48, Cys-51, and Cys-66. Residues 90–129 (MVKKAREGVMEFLLINHPLDCPICDQGGECDLQDQAMAYG) form the 4Fe-4S His(Cys)3-ligated-type domain. Residues His-106, Cys-110, Cys-113, Cys-119, Cys-158, Cys-161, Cys-164, and Cys-208 each coordinate [4Fe-4S] cluster. The 57-residue stretch at 227-283 (LTKTESIDVMDALGSSIRIDTKGREVMRILPRNHDGVNEEWISDKTRFVWDGLRRQR) folds into the 4Fe-4S Mo/W bis-MGD-type domain.

Belongs to the complex I 75 kDa subunit family. In terms of assembly, NDH-1 is composed of at least 14 different subunits, Nqo1 to Nqo14. The complex has a L-shaped structure, with the hydrophobic arm (subunits Nqo7, Nqo8, Nqo10 to Nqo14) embedded in the inner membrane and the hydrophilic peripheral arm (subunits Nqo1 to Nqo6, Nqo9) protruding into the bacterial cytoplasm. The hydrophilic domain contains all the redox centers. [2Fe-2S] cluster serves as cofactor. [4Fe-4S] cluster is required as a cofactor.

Its subcellular location is the cell inner membrane. It catalyses the reaction a quinone + NADH + 5 H(+)(in) = a quinol + NAD(+) + 4 H(+)(out). Functionally, NDH-1 shuttles electrons from NADH, via FMN and iron-sulfur (Fe-S) centers, to quinones in the respiratory chain. The immediate electron acceptor for the enzyme in this species is believed to be ubiquinone. Couples the redox reaction to proton translocation (for every two electrons transferred, four hydrogen ions are translocated across the cytoplasmic membrane), and thus conserves the redox energy in a proton gradient. This is NADH-quinone oxidoreductase chain 3 from Paracoccus denitrificans.